Here is a 275-residue protein sequence, read N- to C-terminus: Ribosomal RNA small subunit methyltransferase A (275 aa).

S-adenosyl-L-methionine-binding residues include Asn19, Leu21, Gly46, Glu71, Asp94, and Asn117.

It belongs to the class I-like SAM-binding methyltransferase superfamily. rRNA adenine N(6)-methyltransferase family. RsmA subfamily.

It localises to the cytoplasm. It carries out the reaction adenosine(1518)/adenosine(1519) in 16S rRNA + 4 S-adenosyl-L-methionine = N(6)-dimethyladenosine(1518)/N(6)-dimethyladenosine(1519) in 16S rRNA + 4 S-adenosyl-L-homocysteine + 4 H(+). Specifically dimethylates two adjacent adenosines (A1518 and A1519) in the loop of a conserved hairpin near the 3'-end of 16S rRNA in the 30S particle. May play a critical role in biogenesis of 30S subunits. The polypeptide is Ribosomal RNA small subunit methyltransferase A (Burkholderia orbicola (strain MC0-3)).